We begin with the raw amino-acid sequence, 596 residues long: Phosphoenolpyruvate carboxykinase [GTP] (596 aa).

Substrate is bound by residues Arg-77 and 205-207; that span reads YGG. Mn(2+)-binding residues include Lys-214 and His-234. A substrate-binding site is contributed by Ser-256. GTP is bound at residue 257–262; the sequence is ACGKTN. Residue Cys-258 is part of the active site. Asp-283 contributes to the Mn(2+) binding site. Residues 362 to 388 are disordered; sequence KKGSTEKAAHPNSRFTAPAKNNPAISP. 373 to 375 contacts substrate; sequence NSR. Residues Arg-375, Arg-406, and 499 to 502 each bind GTP; that span reads YGDN.

This sequence belongs to the phosphoenolpyruvate carboxykinase [GTP] family. Monomer. Mn(2+) serves as cofactor.

It is found in the cytoplasm. The catalysed reaction is oxaloacetate + GTP = phosphoenolpyruvate + GDP + CO2. The protein operates within carbohydrate biosynthesis; gluconeogenesis. Functionally, catalyzes the conversion of oxaloacetate (OAA) to phosphoenolpyruvate (PEP), the rate-limiting step in the metabolic pathway that produces glucose from lactate and other precursors derived from the citric acid cycle. This chain is Phosphoenolpyruvate carboxykinase [GTP], found in Anaeromyxobacter sp. (strain K).